The primary structure comprises 236 residues: Eukaryotic translation initiation factor 3 subunit K (236 aa).

Residues 42-222 form the PCI domain; sequence YDKDILVTTL…TIKSRNIEEK (181 aa).

Belongs to the eIF-3 subunit K family. As to quaternary structure, component of the eukaryotic translation initiation factor 3 (eIF-3) complex.

Its subcellular location is the cytoplasm. Its function is as follows. Component of the eukaryotic translation initiation factor 3 (eIF-3) complex, which is involved in protein synthesis of a specialized repertoire of mRNAs and, together with other initiation factors, stimulates binding of mRNA and methionyl-tRNAi to the 40S ribosome. The eIF-3 complex specifically targets and initiates translation of a subset of mRNAs involved in cell proliferation. This is Eukaryotic translation initiation factor 3 subunit K from Brugia malayi (Filarial nematode worm).